The chain runs to 200 residues: GTP cyclohydrolase-2 (200 aa).

A GTP-binding site is contributed by 50–54; sequence RVHSE. Zn(2+) contacts are provided by Cys55, Cys66, and Cys68. Residues Gln71, 93–95, and Thr115 contribute to the GTP site; that span reads EGR. Residue Asp127 is the Proton acceptor of the active site. Arg129 (nucleophile) is an active-site residue. GTP contacts are provided by Thr150 and Lys155.

It belongs to the GTP cyclohydrolase II family. Requires Zn(2+) as cofactor.

The enzyme catalyses GTP + 4 H2O = 2,5-diamino-6-hydroxy-4-(5-phosphoribosylamino)-pyrimidine + formate + 2 phosphate + 3 H(+). It functions in the pathway cofactor biosynthesis; riboflavin biosynthesis; 5-amino-6-(D-ribitylamino)uracil from GTP: step 1/4. In terms of biological role, catalyzes the conversion of GTP to 2,5-diamino-6-ribosylamino-4(3H)-pyrimidinone 5'-phosphate (DARP), formate and pyrophosphate. This chain is GTP cyclohydrolase-2, found in Acinetobacter baumannii (strain AB307-0294).